The sequence spans 353 residues: Guanine nucleotide-binding protein G(q) subunit alpha (353 aa).

S-palmitoyl cysteine attachment occurs at residues Cys-3 and Cys-4. The G-alpha domain occupies 32–353 (RELKLLLLGT…QLNLKEYNLV (322 aa)). Residues 35–48 (KLLLLGTGESGKST) are G1 motif. GTP contacts are provided by residues 40-47 (GTGESGKS), 174-180 (LRVRVPT), 199-203 (DVGGQ), 268-271 (NKKD), and Ala-325. The Mg(2+) site is built by Ser-47 and Thr-180. The tract at residues 172–180 (DILRVRVPT) is G2 motif. The tract at residues 195 to 204 (FRMVDVGGQR) is G3 motif. A G4 motif region spans residues 264–271 (ILFLNKKD). A G5 motif region spans residues 323–328 (TCATDT).

It belongs to the G-alpha family. G(q) subfamily. In terms of assembly, g proteins are composed of 3 units; alpha, beta and gamma. The alpha chain contains the guanine nucleotide binding site.

Functionally, guanine nucleotide-binding proteins (G proteins) are involved as modulators or transducers in various transmembrane signaling systems. The polypeptide is Guanine nucleotide-binding protein G(q) subunit alpha (Lymnaea stagnalis (Great pond snail)).